Here is a 526-residue protein sequence, read N- to C-terminus: ESX-1 secretion-associated protein EspB (526 aa).

A compositionally biased stretch (basic and acidic residues) spans 1–23; the sequence is MSEELKYELPGLERKAHECESTR. Disordered regions lie at residues 1–35, 91–110, and 271–526; these read MSEE…KPDE, RQMN…VPDM, and QIQE…GKQQ. Residues 303–328 are compositionally biased toward gly residues; the sequence is GGPGGPGSGSGGGSGGGASGGSGGGT. The segment covering 335-362 has biased composition (low complexity); sequence PSTDPSMSPMSTNSAGEEQSSGSPSSGG. Residues 363 to 387 show a composition bias toward gly residues; that stretch reads SSSGGSPSGGSPSGGGAPSSGGMPE. Over residues 393-405 the composition is skewed to low complexity; the sequence is DMPGGPDIPGLDD. Residues 413–429 show a composition bias toward gly residues; it reads AGGGGGGGVGGGGGGGM. The span at 430–440 shows a compositional bias: low complexity; sequence PAAPLGPAVGA. A compositionally biased stretch (gly residues) spans 451-484; that stretch reads RGGGVGVPTGTGGGAGGMMGGGMGGMGAGHGQGQ. A compositionally biased stretch (basic and acidic residues) spans 485-508; that stretch reads GKEKKRDPKLAPDEDLYTEDRAHS.

Belongs to the EspB family.

The protein resides in the secreted. In terms of biological role, involved in DNA conjugation, at least in the recipient strain. This chain is ESX-1 secretion-associated protein EspB, found in Mycolicibacterium smegmatis (strain MKD8) (Mycobacterium smegmatis).